Consider the following 309-residue polypeptide: Ribosomal RNA small subunit methyltransferase H (309 aa).

S-adenosyl-L-methionine contacts are provided by residues 33 to 35, D53, F79, D100, and Q107; that span reads GGH.

It belongs to the methyltransferase superfamily. RsmH family.

Its subcellular location is the cytoplasm. The enzyme catalyses cytidine(1402) in 16S rRNA + S-adenosyl-L-methionine = N(4)-methylcytidine(1402) in 16S rRNA + S-adenosyl-L-homocysteine + H(+). Its function is as follows. Specifically methylates the N4 position of cytidine in position 1402 (C1402) of 16S rRNA. In Clostridium botulinum (strain Okra / Type B1), this protein is Ribosomal RNA small subunit methyltransferase H.